A 257-amino-acid chain; its full sequence is Type III pantothenate kinase (257 aa).

6–13 (DVGNTNTV) is a binding site for ATP. Substrate-binding positions include tyrosine 102 and 109-112 (GADR). The Proton acceptor role is filled by aspartate 111. Position 131 (aspartate 131) interacts with K(+). An ATP-binding site is contributed by threonine 134. Threonine 186 lines the substrate pocket.

The protein belongs to the type III pantothenate kinase family. In terms of assembly, homodimer. NH4(+) serves as cofactor. K(+) is required as a cofactor.

The protein localises to the cytoplasm. The enzyme catalyses (R)-pantothenate + ATP = (R)-4'-phosphopantothenate + ADP + H(+). It functions in the pathway cofactor biosynthesis; coenzyme A biosynthesis; CoA from (R)-pantothenate: step 1/5. Its function is as follows. Catalyzes the phosphorylation of pantothenate (Pan), the first step in CoA biosynthesis. In Leptospira borgpetersenii serovar Hardjo-bovis (strain JB197), this protein is Type III pantothenate kinase.